A 37-amino-acid polypeptide reads, in one-letter code: Large ribosomal subunit protein bL36c (37 aa).

It belongs to the bacterial ribosomal protein bL36 family.

It localises to the plastid. The protein localises to the chloroplast. This chain is Large ribosomal subunit protein bL36c (rpl36), found in Anthoceros angustus (Hornwort).